Consider the following 459-residue polypeptide: 3-carboxy-cis,cis-muconate cycloisomerase (459 aa).

It belongs to the class-II fumarase/aspartase family. Homotetramer.

It localises to the cytoplasm. The catalysed reaction is 2-(carboxymethyl)-5-oxo-2,5-dihydro-2-furoate = 3-carboxy-cis,cis-muconate + H(+). It functions in the pathway aromatic compound metabolism; beta-ketoadipate pathway; 5-oxo-4,5-dihydro-2-furylacetate from 3-carboxy-cis,cis-muconate: step 1/2. Catalyzes an anti cycloisomerization. This Pseudomonas aeruginosa (strain ATCC 15692 / DSM 22644 / CIP 104116 / JCM 14847 / LMG 12228 / 1C / PRS 101 / PAO1) protein is 3-carboxy-cis,cis-muconate cycloisomerase (pcaB).